Reading from the N-terminus, the 1165-residue chain is Leptin receptor (1165 aa).

An N-terminal signal peptide occupies residues Met-1 to Ala-21. At Phe-22–Asp-839 the chain is on the extracellular side. 6 N-linked (GlcNAc...) asparagine glycosylation sites follow: Asn-23, Asn-41, Asn-56, Asn-73, Asn-81, and Asn-98. 5 cysteine pairs are disulfide-bonded: Cys-37–Cys-90, Cys-89–Cys-99, Cys-131–Cys-142, Cys-186–Cys-196, and Cys-188–Cys-193. An N-linked (GlcNAc...) asparagine glycan is attached at Asn-187. Residues Asn-206, Asn-276, Asn-347, and Asn-397 are each glycosylated (N-linked (GlcNAc...) asparagine). Residues Pro-239–Val-333 enclose the Fibronectin type-III 1 domain. One can recognise an Ig-like domain in the interval Gln-331–Asp-429. 5 disulfides stabilise this stretch: Cys-352–Cys-412, Cys-413–Cys-418, Cys-436–Cys-447, Cys-473–Cys-528, and Cys-488–Cys-498. Residues His-467–Glu-484 form a leptin-binding region. 7 N-linked (GlcNAc...) asparagine glycosylation sites follow: Asn-516, Asn-624, Asn-659, Asn-688, Asn-697, Asn-728, and Asn-750. 3 Fibronectin type-III domains span residues Pro-539–Met-634, Pro-639–Ser-732, and Ile-740–Ile-833. A WSXWS motif motif is present at residues Trp-622 to Ser-626. A helical transmembrane segment spans residues Ala-840–Ile-862. Over Ser-863 to Val-1165 the chain is Cytoplasmic. Residues Phe-871–Lys-879 carry the Box 1 motif motif. At Ser-882 the chain carries Phosphoserine. The segment at Glu-893–Leu-898 is required for JAK2 activation. Residues Leu-898–Val-906 form a required for STAT3 phosphorylation region. Tyr-986 is subject to Phosphotyrosine; by JAK2. Tyr-1079 carries the post-translational modification Phosphotyrosine. Tyr-1141 is modified (phosphotyrosine; by JAK2).

The protein belongs to the type I cytokine receptor family. Type 2 subfamily. In terms of assembly, present as a mixture of monomers and dimers. The phosphorylated receptor binds a number of SH2 domain-containing proteins such as JAK2, STAT3, PTPN11, and SOCS3. Interaction with SOCS3 inhibits JAK/STAT signaling and MAPK cascade. In terms of processing, on ligand binding, phosphorylated on two conserved C-terminal tyrosine residues (isoform B only) by JAK2. Tyr-986 is required for complete binding and activation of PTPN11, ERK/FOS activation,for interaction with SOCS3 and SOCS3 mediated inhibition of leptin signaling. Phosphorylation on Tyr-1141 is required for STAT3 binding/activation. Phosphorylation of Tyr-1079 has a more accessory role. In terms of tissue distribution, isoform A is expressed in fetal liver and in hematopoietic tissues and choroid plexus. In adults highest expression in heart, liver, small intestine, prostate and ovary. Low level in lung and kidney. Isoform B is highly expressed in hypothalamus, but also in skeletal muscle. Detected in fundic and antral epithelial cells of the gastric mucosa. Isoform B and isoform A are expressed by NK cells (at protein level).

The protein localises to the cell membrane. It is found in the basolateral cell membrane. It localises to the secreted. Receptor for hormone LEP/leptin. On ligand binding, mediates LEP central and peripheral effects through the activation of different signaling pathways such as JAK2/STAT3 and MAPK cascade/FOS. In the hypothalamus, LEP acts as an appetite-regulating factor that induces a decrease in food intake and an increase in energy consumption by inducing anorexinogenic factors and suppressing orexigenic neuropeptides, also regulates bone mass and secretion of hypothalamo-pituitary-adrenal hormones. In the periphery, increases basal metabolism, influences reproductive function, regulates pancreatic beta-cell function and insulin secretion, is pro-angiogenic and affects innate and adaptive immunity. Control of energy homeostasis and melanocortin production (stimulation of POMC and full repression of AgRP transcription) is mediated by STAT3 signaling, whereas distinct signals regulate NPY and the control of fertility, growth and glucose homeostasis. Involved in the regulation of counter-regulatory response to hypoglycemia by inhibiting neurons of the parabrachial nucleus. Has a specific effect on T lymphocyte responses, differentially regulating the proliferation of naive and memory T -ells. Leptin increases Th1 and suppresses Th2 cytokine production. Its function is as follows. May transport LEP across the blood-brain barrier. Binds LEP and mediates LEP endocytosis. Does not induce phosphorylation of and activate STAT3. In terms of biological role, antagonizes Isoform A and isoform B-mediated LEP binding and endocytosis. This is Leptin receptor (LEPR) from Homo sapiens (Human).